The sequence spans 237 residues: Ribose-5-phosphate isomerase A (237 aa).

Substrate is bound by residues 33–36, 90–93, and 103–106; these read TGST, DGAD, and KGGG. Catalysis depends on glutamate 112, which acts as the Proton acceptor. Position 130 (lysine 130) interacts with substrate.

Belongs to the ribose 5-phosphate isomerase family. As to quaternary structure, homodimer.

The enzyme catalyses aldehydo-D-ribose 5-phosphate = D-ribulose 5-phosphate. Its pathway is carbohydrate degradation; pentose phosphate pathway; D-ribose 5-phosphate from D-ribulose 5-phosphate (non-oxidative stage): step 1/1. In terms of biological role, catalyzes the reversible conversion of ribose-5-phosphate to ribulose 5-phosphate. This Trichodesmium erythraeum (strain IMS101) protein is Ribose-5-phosphate isomerase A.